The primary structure comprises 678 residues: Pescadillo homolog (678 aa).

A disordered region spans residues 265 to 289 (PQQQTKTNNTTKKSKSTTAAAAATT). Positions 269–289 (TKTNNTTKKSKSTTAAAAATT) are enriched in low complexity. A BRCT domain is found at 352 to 442 (DVTTLFKGFH…LLLPYSEYTI (91 aa)). 2 disordered regions span residues 485–601 (TNAE…EDTK) and 626–678 (ATAN…KQKK). A compositionally biased stretch (acidic residues) spans 505–518 (SDGESDDEDDEDLE). Positions 519-531 (HLETRYTEELRKE) are enriched in basic and acidic residues. The span at 541–574 (VDDDDEEEEDGEEDGEEEEEEEDGEEESESESES) shows a compositional bias: acidic residues. Positions 581-640 (VLTKKQRDELNKQKQAEEDTKLAELMIRKKDKWIYNKVKETNQQRATANQTLLEKRNKVE) form a coiled coil. Basic and acidic residues-rich tracts occupy residues 585-601 (KQRD…EDTK) and 633-643 (LEKRNKVESGK). Positions 649-678 (VKVAPQPKKPAPLVKKSQQKQQQASKKQKK) are enriched in low complexity.

Belongs to the pescadillo family.

Its subcellular location is the nucleus. The protein resides in the nucleolus. It is found in the nucleoplasm. Functionally, required for maturation of ribosomal RNAs and formation of the large ribosomal subunit. The sequence is that of Pescadillo homolog from Dictyostelium discoideum (Social amoeba).